A 194-amino-acid polypeptide reads, in one-letter code: Accessory gene regulator protein B (194 aa).

5 helical membrane-spanning segments follow: residues isoleucine 44–leucine 64, serine 80–isoleucine 100, phenylalanine 107–alanine 127, lysine 142–proline 162, and valine 163–phenylalanine 183.

This sequence belongs to the AgrB family.

It is found in the cell membrane. Essential for the production of a quorum sensing system signal molecule, the autoinducing peptide (AIP). This quorum sensing system is responsible for the regulation of the expression of virulence factor genes. Involved in the proteolytic processing of AgrD, the precursor of AIP. In Staphylococcus epidermidis, this protein is Accessory gene regulator protein B.